The chain runs to 331 residues: MMQTSRTLHNLGSKAASSAAPYQTECVESHQEANGVHYGKFALGPLERGQGITVGNALRRVLLSNLEGTAVTAVRIAGVTHEFSTVPGVREDVMEILLNMKELVLRSNAPDTQVGRLVAQGPGEVTAEKLQLPSEVEVINPRHHIATLAEGAILEMEFMIGRGRGYRAVDYSDSKSMAIDFLQIDSVFMPVRKVNYTVEAARVGQSLEKDRLILEIWTNGSLTPQEALSQAARILVGLFSPLQEVSFDTPPEPRQAEDNQKNQIPIEELQLSVRAYNCLKRAQINTVADLLVYTEEDLLEIKNFGQKSAEEVVQALKNRLGLTLPRERSKT.

The tract at residues 1–246 (MMQTSRTLHN…GLFSPLQEVS (246 aa)) is alpha N-terminal domain (alpha-NTD). The tract at residues 256-331 (AEDNQKNQIP…LTLPRERSKT (76 aa)) is alpha C-terminal domain (alpha-CTD).

It belongs to the RNA polymerase alpha chain family. In cyanobacteria the RNAP catalytic core is composed of 2 alpha, 1 beta, 1 beta', 1 gamma and 1 omega subunit. When a sigma factor is associated with the core the holoenzyme is formed, which can initiate transcription.

It catalyses the reaction RNA(n) + a ribonucleoside 5'-triphosphate = RNA(n+1) + diphosphate. In terms of biological role, DNA-dependent RNA polymerase catalyzes the transcription of DNA into RNA using the four ribonucleoside triphosphates as substrates. The protein is DNA-directed RNA polymerase subunit alpha of Synechococcus sp. (strain JA-3-3Ab) (Cyanobacteria bacterium Yellowstone A-Prime).